The following is a 568-amino-acid chain: Small ribosomal subunit protein bS1 (568 aa).

S1 motif domains lie at Gly27 to Glu93, Gly111 to Arg177, Gly198 to Lys266, Gly283 to Lys353, Gly370 to Lys440, and Asn459 to Lys530.

The protein belongs to the bacterial ribosomal protein bS1 family.

Functionally, binds mRNA; thus facilitating recognition of the initiation point. It is needed to translate mRNA with a short Shine-Dalgarno (SD) purine-rich sequence. This is Small ribosomal subunit protein bS1 (rpsA) from Rhizobium meliloti (strain 1021) (Ensifer meliloti).